We begin with the raw amino-acid sequence, 229 residues long: MANELTWHDVLAEEKQQPYFLNTLQTVASERQSGITVYPPQKDVFNAFRFTELGDVKVVILGQDPYHGPGQAHGLAFSVRPGIAIPPSLLNMYKELENTIPGFTRPGHGYLESWARQGVLLLNTVLTVRAGQAHSHASLGWETFTDKVISLINQHREGVVFLLWGSHAQKKGAIIDKQRHHVLKAPHPSPLSAHRGFFGCNHFVLANQWLEQRGEKPIDWMPVLPAESE.

Asp64 functions as the Proton acceptor in the catalytic mechanism.

It belongs to the uracil-DNA glycosylase (UDG) superfamily. UNG family.

The protein resides in the cytoplasm. The catalysed reaction is Hydrolyzes single-stranded DNA or mismatched double-stranded DNA and polynucleotides, releasing free uracil.. In terms of biological role, excises uracil residues from the DNA which can arise as a result of misincorporation of dUMP residues by DNA polymerase or due to deamination of cytosine. This Escherichia fergusonii (strain ATCC 35469 / DSM 13698 / CCUG 18766 / IAM 14443 / JCM 21226 / LMG 7866 / NBRC 102419 / NCTC 12128 / CDC 0568-73) protein is Uracil-DNA glycosylase.